We begin with the raw amino-acid sequence, 95 residues long: Large ribosomal subunit protein bL28 (95 aa).

Belongs to the bacterial ribosomal protein bL28 family.

The chain is Large ribosomal subunit protein bL28 from Dinoroseobacter shibae (strain DSM 16493 / NCIMB 14021 / DFL 12).